The following is a 161-amino-acid chain: Large ribosomal subunit protein uL23m (161 aa).

A mitochondrion-targeting transit peptide spans 1–34; sequence MSKIAGKRLVYFPNITFTLCRGLNLQPKFAVFRV.

The protein belongs to the universal ribosomal protein uL23 family. In terms of assembly, component of the mitochondrial large ribosomal subunit (mt-LSU). Mature yeast 74S mitochondrial ribosomes consist of a small (37S) and a large (54S) subunit. The 37S small subunit contains a 15S ribosomal RNA (15S mt-rRNA) and at least 32 different proteins. The 54S large subunit contains a 21S rRNA (21S mt-rRNA) and at least 45 different proteins. uL23m forms the wall of the exit tunnel. Interacts with the C-terminus of OXA1.

Its subcellular location is the mitochondrion. In terms of biological role, component of the mitochondrial ribosome (mitoribosome), a dedicated translation machinery responsible for the synthesis of mitochondrial genome-encoded proteins, including at least some of the essential transmembrane subunits of the mitochondrial respiratory chain. The mitoribosomes are attached to the mitochondrial inner membrane and translation products are cotranslationally integrated into the membrane. The polypeptide is Large ribosomal subunit protein uL23m (mrp20) (Schizosaccharomyces pombe (strain 972 / ATCC 24843) (Fission yeast)).